Consider the following 279-residue polypeptide: Acetylglutamate kinase (279 aa).

Substrate contacts are provided by residues 64–65 (GG), arginine 86, and asparagine 177.

The protein belongs to the acetylglutamate kinase family. ArgB subfamily.

The protein localises to the cytoplasm. It catalyses the reaction N-acetyl-L-glutamate + ATP = N-acetyl-L-glutamyl 5-phosphate + ADP. It functions in the pathway amino-acid biosynthesis; L-arginine biosynthesis; N(2)-acetyl-L-ornithine from L-glutamate: step 2/4. Functionally, catalyzes the ATP-dependent phosphorylation of N-acetyl-L-glutamate. The chain is Acetylglutamate kinase from Campylobacter jejuni subsp. jejuni serotype O:2 (strain ATCC 700819 / NCTC 11168).